Consider the following 54-residue polypeptide: Large ribosomal subunit protein bL33B (54 aa).

Belongs to the bacterial ribosomal protein bL33 family.

The sequence is that of Large ribosomal subunit protein bL33B from Mycolicibacterium vanbaalenii (strain DSM 7251 / JCM 13017 / BCRC 16820 / KCTC 9966 / NRRL B-24157 / PYR-1) (Mycobacterium vanbaalenii).